A 364-amino-acid polypeptide reads, in one-letter code: tRNA/tmRNA (uracil-C(5))-methyltransferase (364 aa).

Residues Q188, Y216, N221, E237, and D297 each coordinate S-adenosyl-L-methionine. Catalysis depends on C322, which acts as the Nucleophile. E356 serves as the catalytic Proton acceptor.

This sequence belongs to the class I-like SAM-binding methyltransferase superfamily. RNA M5U methyltransferase family. TrmA subfamily.

The catalysed reaction is uridine(54) in tRNA + S-adenosyl-L-methionine = 5-methyluridine(54) in tRNA + S-adenosyl-L-homocysteine + H(+). It carries out the reaction uridine(341) in tmRNA + S-adenosyl-L-methionine = 5-methyluridine(341) in tmRNA + S-adenosyl-L-homocysteine + H(+). Dual-specificity methyltransferase that catalyzes the formation of 5-methyluridine at position 54 (m5U54) in all tRNAs, and that of position 341 (m5U341) in tmRNA (transfer-mRNA). This is tRNA/tmRNA (uracil-C(5))-methyltransferase from Colwellia psychrerythraea (strain 34H / ATCC BAA-681) (Vibrio psychroerythus).